A 194-amino-acid chain; its full sequence is 7-methyl-GTP pyrophosphatase (194 aa).

The Proton acceptor role is filled by Asp-69.

It belongs to the Maf family. YceF subfamily. It depends on a divalent metal cation as a cofactor.

The protein resides in the cytoplasm. It catalyses the reaction N(7)-methyl-GTP + H2O = N(7)-methyl-GMP + diphosphate + H(+). In terms of biological role, nucleoside triphosphate pyrophosphatase that hydrolyzes 7-methyl-GTP (m(7)GTP). May have a dual role in cell division arrest and in preventing the incorporation of modified nucleotides into cellular nucleic acids. This chain is 7-methyl-GTP pyrophosphatase (yceF1), found in Salmonella choleraesuis (strain SC-B67).